We begin with the raw amino-acid sequence, 244 residues long: NAD(P)H-quinone oxidoreductase subunit K (244 aa).

Residues cysteine 60, cysteine 61, cysteine 125, and cysteine 156 each contribute to the [4Fe-4S] cluster site.

Belongs to the complex I 20 kDa subunit family. NDH-1 can be composed of about 15 different subunits; different subcomplexes with different compositions have been identified which probably have different functions. Requires [4Fe-4S] cluster as cofactor.

It localises to the cellular thylakoid membrane. It catalyses the reaction a plastoquinone + NADH + (n+1) H(+)(in) = a plastoquinol + NAD(+) + n H(+)(out). The enzyme catalyses a plastoquinone + NADPH + (n+1) H(+)(in) = a plastoquinol + NADP(+) + n H(+)(out). NDH-1 shuttles electrons from an unknown electron donor, via FMN and iron-sulfur (Fe-S) centers, to quinones in the respiratory and/or the photosynthetic chain. The immediate electron acceptor for the enzyme in this species is believed to be plastoquinone. Couples the redox reaction to proton translocation, and thus conserves the redox energy in a proton gradient. Cyanobacterial NDH-1 also plays a role in inorganic carbon-concentration. The sequence is that of NAD(P)H-quinone oxidoreductase subunit K from Prochlorococcus marinus (strain MIT 9515).